The sequence spans 220 residues: Small ribosomal subunit protein eS8 (220 aa).

It belongs to the eukaryotic ribosomal protein eS8 family.

This is Small ribosomal subunit protein eS8 (RPS8A) from Leishmania major.